We begin with the raw amino-acid sequence, 120 residues long: ATP-dependent Clp protease adapter protein ClpS (120 aa).

Belongs to the ClpS family. In terms of assembly, binds to the N-terminal domain of the chaperone ClpA.

Functionally, involved in the modulation of the specificity of the ClpAP-mediated ATP-dependent protein degradation. This is ATP-dependent Clp protease adapter protein ClpS from Pseudomonas savastanoi pv. phaseolicola (strain 1448A / Race 6) (Pseudomonas syringae pv. phaseolicola (strain 1448A / Race 6)).